The primary structure comprises 135 residues: MNRKKSREVAMKLLFEISINKNSISDTIEHYKENNEIENLDFEYIERILRGIDENMEYIDSKIEESSKKWKISRISKINITILRMAAYEIFFEKDIPCKVSANEAVELAKSYAEENSFSFVNGVIGNLINSSEEK.

The protein belongs to the NusB family.

Functionally, involved in transcription antitermination. Required for transcription of ribosomal RNA (rRNA) genes. Binds specifically to the boxA antiterminator sequence of the ribosomal RNA (rrn) operons. This chain is Transcription antitermination protein NusB, found in Clostridium acetobutylicum (strain ATCC 824 / DSM 792 / JCM 1419 / IAM 19013 / LMG 5710 / NBRC 13948 / NRRL B-527 / VKM B-1787 / 2291 / W).